A 431-amino-acid chain; its full sequence is Adenylosuccinate synthetase (431 aa).

Residues 13–19 (GDEGKGK) and 41–43 (GHT) contribute to the GTP site. The Proton acceptor role is filled by Asp-14. Asp-14 and Gly-41 together coordinate Mg(2+). IMP contacts are provided by residues 14 to 17 (DEGK), 39 to 42 (NAGH), Thr-130, Arg-144, Gln-225, Thr-240, and Arg-304. Residue His-42 is the Proton donor of the active site. 300 to 306 (ATTGRKR) contributes to the substrate binding site. Residues Arg-306, 332–334 (KLD), and 415–417 (STG) contribute to the GTP site.

Belongs to the adenylosuccinate synthetase family. As to quaternary structure, homodimer. It depends on Mg(2+) as a cofactor.

The protein localises to the cytoplasm. It catalyses the reaction IMP + L-aspartate + GTP = N(6)-(1,2-dicarboxyethyl)-AMP + GDP + phosphate + 2 H(+). It functions in the pathway purine metabolism; AMP biosynthesis via de novo pathway; AMP from IMP: step 1/2. In terms of biological role, plays an important role in the de novo pathway of purine nucleotide biosynthesis. Catalyzes the first committed step in the biosynthesis of AMP from IMP. In Shewanella loihica (strain ATCC BAA-1088 / PV-4), this protein is Adenylosuccinate synthetase.